The following is a 910-amino-acid chain: Aconitate hydratase A (910 aa).

3 residues coordinate [4Fe-4S] cluster: Cys454, Cys520, and Cys523.

Belongs to the aconitase/IPM isomerase family. Monomer. It depends on [4Fe-4S] cluster as a cofactor.

It carries out the reaction citrate = D-threo-isocitrate. The catalysed reaction is (2S,3R)-3-hydroxybutane-1,2,3-tricarboxylate = 2-methyl-cis-aconitate + H2O. Its pathway is carbohydrate metabolism; tricarboxylic acid cycle; isocitrate from oxaloacetate: step 2/2. It functions in the pathway organic acid metabolism; propanoate degradation. Its function is as follows. Involved in the catabolism of short chain fatty acids (SCFA) via the tricarboxylic acid (TCA)(acetyl degradation route) and probably the 2-methylcitrate cycle I (propionate degradation route). Catalyzes the reversible isomerization of citrate to isocitrate via cis-aconitate. Could catalyze the hydration of 2-methyl-cis-aconitate to yield (2R,3S)-2-methylisocitrate. The apo form of AcnA functions as a RNA-binding regulatory protein. The polypeptide is Aconitate hydratase A (acnA) (Pseudomonas aeruginosa (strain ATCC 15692 / DSM 22644 / CIP 104116 / JCM 14847 / LMG 12228 / 1C / PRS 101 / PAO1)).